The sequence spans 452 residues: Translation initiation factor eIF2B subunit gamma (452 aa).

M1 carries the post-translational modification N-acetylmethionine. S261 is subject to Phosphoserine.

It belongs to the eIF-2B gamma/epsilon subunits family. As to quaternary structure, component of the translation initiation factor 2B (eIF2B) complex which is a heterodecamer of two sets of five different subunits: alpha, beta, gamma, delta and epsilon. Subunits alpha, beta and delta comprise a regulatory subcomplex and subunits epsilon and gamma comprise a catalytic subcomplex. Within the complex, the hexameric regulatory complex resides at the center, with the two heterodimeric catalytic subcomplexes bound on opposite sides.

Its subcellular location is the cytoplasm. It localises to the cytosol. Its activity is regulated as follows. Activated by the chemical integrated stress response (ISR) inhibitor ISRIB which stimulates guanine nucleotide exchange factor activity for both phosphorylated and unphosphorylated eIF2. Acts as a component of the translation initiation factor 2B (eIF2B) complex, which catalyzes the exchange of GDP for GTP on the eukaryotic initiation factor 2 (eIF2) complex gamma subunit. Its guanine nucleotide exchange factor activity is repressed when bound to eIF2 complex phosphorylated on the alpha subunit, thereby limiting the amount of methionyl-initiator methionine tRNA available to the ribosome and consequently global translation is repressed. The sequence is that of Translation initiation factor eIF2B subunit gamma (EIF2B3) from Bos taurus (Bovine).